A 1055-amino-acid chain; its full sequence is Error-prone DNA polymerase (1055 aa).

It belongs to the DNA polymerase type-C family. DnaE2 subfamily.

The protein resides in the cytoplasm. It carries out the reaction DNA(n) + a 2'-deoxyribonucleoside 5'-triphosphate = DNA(n+1) + diphosphate. DNA polymerase involved in damage-induced mutagenesis and translesion synthesis (TLS). It is not the major replicative DNA polymerase. This chain is Error-prone DNA polymerase, found in Corynebacterium glutamicum (strain ATCC 13032 / DSM 20300 / JCM 1318 / BCRC 11384 / CCUG 27702 / LMG 3730 / NBRC 12168 / NCIMB 10025 / NRRL B-2784 / 534).